A 93-amino-acid polypeptide reads, in one-letter code: Cytochrome c oxidase polypeptide 6, mitochondrial (93 aa).

The Mitochondrial matrix portion of the chain corresponds to 2–33 (STGNESYNLRYPKGFKGYPYNMYKLEGYGTPK). The chain crosses the membrane as a helical span at residues 34–53 (GYITLIGVVATLTVSGLFFA). Over 54–93 (KTRSNKREYPTHNKEWRAKTLAYAKETNADPIYQLPKDKI) the chain is Mitochondrial intermembrane.

This sequence belongs to the cytochrome c oxidase IV family. As to quaternary structure, component of the cytochrome c oxidase (complex IV, CIV), a multisubunit enzyme composed of a catalytic core of 3 subunits and seevral supernumerary subunits. The complex exists as a monomer or a dimer and forms supercomplexes (SCs) in the inner mitochondrial membrane with ubiquinol-cytochrome c oxidoreductase (cytochrome b-c1 complex, complex III, CIII).

Its subcellular location is the mitochondrion inner membrane. The protein operates within energy metabolism; oxidative phosphorylation. Its function is as follows. Component of the cytochrome c oxidase, the last enzyme in the mitochondrial electron transport chain which drives oxidative phosphorylation. The respiratory chain contains 3 multisubunit complexes succinate dehydrogenase (complex II, CII), ubiquinol-cytochrome c oxidoreductase (cytochrome b-c1 complex, complex III, CIII) and cytochrome c oxidase (complex IV, CIV), that cooperate to transfer electrons derived from NADH and succinate to molecular oxygen, creating an electrochemical gradient over the inner membrane that drives transmembrane transport and the ATP synthase. Cytochrome c oxidase is the component of the respiratory chain that catalyzes the reduction of oxygen to water. Electrons originating from reduced cytochrome c in the intermembrane space (IMS) are transferred via the dinuclear copper A center (CU(A)) of subunit 2 and heme A of subunit 1 to the active site in subunit 1, a binuclear center (BNC) formed by heme A3 and copper B (CU(B)). The BNC reduces molecular oxygen to 2 water molecules using 4 electrons from cytochrome c in the IMS and 4 protons from the mitochondrial matrix. This is Cytochrome c oxidase polypeptide 6, mitochondrial (cxfA) from Dictyostelium discoideum (Social amoeba).